Reading from the N-terminus, the 582-residue chain is PTS system lactose-specific EIICB component (582 aa).

Residues 8-409 form the PTS EIIC type-3 domain; that stretch reads IEKGKPFFEK…VVDVIIYYPF (402 aa). Helical transmembrane passes span 30–50, 64–84, 103–123, 137–157, 176–196, 222–242, 283–303, 339–359, and 381–401; these read GFIAAIPIILFSSIFILITYV, GILMKPYNYTMGIVGLLVAGT, INFISTMMAAICGFLFLAADP, KGLLTAFISAFITVIVYNFFV, VFKDIFPLSAVILILYALDLL, GWIGVTLIFGAFAFFWFVGIH, FVATMGGTGATLVVPFMFMWL, VFFIPFIFAPIVNIWIFKFFV, and IVMGTGFAFWSFVLAILLIVV. The disordered stretch occupies residues 453–473; that stretch reads ASEADTDDTSSVDETTSTSST. Residues 464 to 473 are compositionally biased toward low complexity; that stretch reads VDETTSTSST. The PTS EIIB type-3 domain maps to 479–582; sequence QTNVLVLCAG…LEFVKQQFNN (104 aa). Cys-486 serves as the catalytic Phosphocysteine intermediate; for EIIB activity. Position 486 is a phosphocysteine; by EIIA (Cys-486).

Its subcellular location is the cell membrane. The catalysed reaction is lactose(out) + N(pros)-phospho-L-histidyl-[protein] = lactose 6-phosphate(in) + L-histidyl-[protein]. Functionally, the phosphoenolpyruvate-dependent sugar phosphotransferase system (sugar PTS), a major carbohydrate active transport system, catalyzes the phosphorylation of incoming sugar substrates concomitantly with their translocation across the cell membrane. The enzyme II LacEF PTS system is involved in lactose transport. This is PTS system lactose-specific EIICB component from Staphylococcus epidermidis (strain ATCC 35984 / DSM 28319 / BCRC 17069 / CCUG 31568 / BM 3577 / RP62A).